Here is a 137-residue protein sequence, read N- to C-terminus: Ribosome-binding factor A (137 aa).

This sequence belongs to the RbfA family. In terms of assembly, monomer. Binds 30S ribosomal subunits, but not 50S ribosomal subunits or 70S ribosomes.

The protein localises to the cytoplasm. In terms of biological role, one of several proteins that assist in the late maturation steps of the functional core of the 30S ribosomal subunit. Associates with free 30S ribosomal subunits (but not with 30S subunits that are part of 70S ribosomes or polysomes). Required for efficient processing of 16S rRNA. May interact with the 5'-terminal helix region of 16S rRNA. This is Ribosome-binding factor A from Rhodopseudomonas palustris (strain TIE-1).